The following is a 428-amino-acid chain: Gamma-glutamyl phosphate reductase (428 aa).

It belongs to the gamma-glutamyl phosphate reductase family.

It is found in the cytoplasm. The enzyme catalyses L-glutamate 5-semialdehyde + phosphate + NADP(+) = L-glutamyl 5-phosphate + NADPH + H(+). It functions in the pathway amino-acid biosynthesis; L-proline biosynthesis; L-glutamate 5-semialdehyde from L-glutamate: step 2/2. In terms of biological role, catalyzes the NADPH-dependent reduction of L-glutamate 5-phosphate into L-glutamate 5-semialdehyde and phosphate. The product spontaneously undergoes cyclization to form 1-pyrroline-5-carboxylate. The chain is Gamma-glutamyl phosphate reductase from Clostridium tetani (strain Massachusetts / E88).